Reading from the N-terminus, the 641-residue chain is Protein GAMETE EXPRESSED 3 (641 aa).

Residues 1–29 (MVAFRFVYIPLPFFFFFFFFFVFFSGVSQ) form the signal peptide. Residues 441–461 (IIWFLLFEFVIMVLFAALVRF) traverse the membrane as a helical segment. A disordered region spans residues 570 to 627 (ITIFQTPSDESSSEESYRDEHYDDVADDEHDEDDLDRKQKGKLLAHSEGSSNDGDGIA). The span at 584-593 (ESYRDEHYDD) shows a compositional bias: basic and acidic residues. Acidic residues predominate over residues 594 to 603 (VADDEHDEDD).

Expressed in mature siliques and in pollen, mainly in the sperm cells. Detected in the egg cell within the female gametophyte.

Its subcellular location is the cell membrane. In terms of biological role, required for micropylar pollen tube guidance. Plays a role during early embryo patterning. The chain is Protein GAMETE EXPRESSED 3 (GEX3) from Arabidopsis thaliana (Mouse-ear cress).